The following is a 757-amino-acid chain: Voltage-gated potassium channel KCNC3 (757 aa).

The important for normal N-type inactivation stretch occupies residues 1 to 78 (MLSSVCVSSF…CPGLPAAAMG (78 aa)). The interval 1–87 (MLSSVCVSSF…GRHGGGGGDS (87 aa)) is disordered. Over 1–290 (MLSSVCVSSF…EDPYSSRAAR (290 aa)) the chain is Cytoplasmic. Positions 21–40 (PAPPPQPPESPPPPPLPPQQ) are enriched in pro residues. The segment covering 41 to 52 (QQPAQPGPAASP) has biased composition (low complexity). 4 residues coordinate Zn(2+): histidine 157, cysteine 163, cysteine 184, and cysteine 185. Positions 210–219 (AANAANAAGA) are enriched in low complexity. A disordered region spans residues 210–232 (AANAANAAGAHDGGLDDEAGAGG). Residues 291–309 (YVAFASLFFILISITTFCL) traverse the membrane as a helical segment. N-linked (GlcNAc...) asparagine glycosylation is found at asparagine 320 and asparagine 336. The chain crosses the membrane as a helical span at residues 351 to 370 (VEGVCVVWFTFEFLMRITFC). The Cytoplasmic segment spans residues 371 to 379 (PDKVEFLKS). The helical transmembrane segment at 380-398 (SLNIIDCVAILPFYLEVGL) threads the bilayer. Residues 412 to 434 (FLRVVRFVRILRIFKLTRHFVGL) traverse the membrane as a helical; Voltage-sensor segment. Topologically, residues 435–447 (RVLGHTLRASTNE) are cytoplasmic. Residues 448–469 (FLLLIIFLALGVLIFATMIYYA) traverse the membrane as a helical segment. N-linked (GlcNAc...) asparagine glycosylation occurs at asparagine 483. K(+) is bound by residues threonine 503, leucine 504, glycine 505, and tyrosine 506. The Selectivity filter signature appears at 503–508 (TLGYGD). Residues 518-539 (LVGALCALAGVLTIAMPVPVIV) form a helical membrane-spanning segment. Residues 540–757 (NNFGMYYSLA…NANAAAWISP (218 aa)) lie on the Cytoplasmic side of the membrane. The tract at residues 556 to 613 (PKKKNKHIPRPPQPGSPNYCKPDPPPPPPPHPHHGSGGISPPPPITPPSMGVTVAGAY) is disordered. Arginine 625 bears the Omega-N-methylarginine mark. The segment at 682-746 (QPAMSPEDKS…KPGPPSFLPD (65 aa)) is disordered. 2 positions are modified to phosphoserine: serine 686 and serine 691. Over residues 728–743 (PPLPPQDWRKPGPPSF) the composition is skewed to pro residues.

Belongs to the potassium channel family. C (Shaw) (TC 1.A.1.2) subfamily. Kv3.3/KCNC3 sub-subfamily. In terms of assembly, homotetramer. Heterotetramer with KCNC1. Interacts (via C-terminus) with HAX1; this interaction modulates channel gating. Identified in a complex with ACTR3, a subunit of the Arp2/3 complex; this interaction is indirect and depends on the presence of HAX1. Post-translationally, N-glycosylated.

It localises to the cell membrane. It is found in the presynaptic cell membrane. The protein localises to the perikaryon. The protein resides in the cell projection. Its subcellular location is the axon. It localises to the dendrite. It is found in the dendritic spine membrane. The protein localises to the cytoplasm. The protein resides in the cell cortex. Its subcellular location is the cytoskeleton. The catalysed reaction is K(+)(in) = K(+)(out). Functionally, voltage-gated potassium channel that plays an important role in the rapid repolarization of fast-firing brain neurons. The channel opens in response to the voltage difference across the membrane, forming a potassium-selective channel through which potassium ions pass in accordance with their electrochemical gradient. The channel displays rapid activation and inactivation kinetics. It plays a role in the regulation of the frequency, shape and duration of action potentials in Purkinje cells. Required for normal survival of cerebellar neurons, probably via its role in regulating the duration and frequency of action potentials that in turn regulate the activity of voltage-gated Ca(2+) channels and cellular Ca(2+) homeostasis. Required for normal motor function. Plays a role in the reorganization of the cortical actin cytoskeleton and the formation of actin veil structures in neuronal growth cones via its interaction with HAX1 and the Arp2/3 complex. This chain is Voltage-gated potassium channel KCNC3 (KCNC3), found in Homo sapiens (Human).